The following is a 340-amino-acid chain: 2-deoxy-scyllo-inosamine dehydrogenase (340 aa).

Zn(2+)-binding residues include C37, H59, C89, C92, C95, C103, and E144.

Belongs to the zinc-containing alcohol dehydrogenase family. DOIA dehydrogenase subfamily. Zn(2+) is required as a cofactor.

The enzyme catalyses 2-deoxy-scyllo-inosamine + NADP(+) = 3-amino-2,3-dideoxy-scyllo-inosose + NADPH + H(+). The catalysed reaction is 2-deoxy-scyllo-inosamine + NAD(+) = 3-amino-2,3-dideoxy-scyllo-inosose + NADH + H(+). Its pathway is metabolic intermediate biosynthesis; 2-deoxystreptamine biosynthesis; 2-deoxystreptamine from D-glucose 6-phosphate: step 3/4. It participates in antibiotic biosynthesis; neomycin biosynthesis. Functionally, catalyzes the oxidation of 2-deoxy-scyllo-inosamine (DOIA) with NAD(+) or NADP(+), forming 3-amino-2,3-dideoxy-scyllo-inosose (amino-DOI). This Streptomyces fradiae (Streptomyces roseoflavus) protein is 2-deoxy-scyllo-inosamine dehydrogenase (neoA).